The primary structure comprises 341 residues: Heat-inducible transcription repressor HrcA (341 aa).

It belongs to the HrcA family.

In terms of biological role, negative regulator of class I heat shock genes (grpE-dnaK-dnaJ and groELS operons). Prevents heat-shock induction of these operons. In Corynebacterium glutamicum (strain ATCC 13032 / DSM 20300 / JCM 1318 / BCRC 11384 / CCUG 27702 / LMG 3730 / NBRC 12168 / NCIMB 10025 / NRRL B-2784 / 534), this protein is Heat-inducible transcription repressor HrcA.